Consider the following 397-residue polypeptide: MPKVIAINAGSSSLKFQLFNMPSEEVLTKGVVERIGFEDAIFNITVNGEKIKEVTPIPDHAVAVKMLLDKLIELGIIQSFDEIEGIGHRVVHGGEKFSDSVLITDETLKEIEDLSDLAPLHNPANVVGIKAFREVLPNVPAVAVFDTAFHQTMPEQSFLYSLPYEYYEKFGIRKYGFHGTSHKYVTQRAAELLGRPIEQLRLISCHLGNGASIAAVEGGKSIDTSMGFTPLAGVAMGTRSGNIDPALIPYIMQKTGKTAEEVIDILNKKSGMLGLTGFSSDLRDIEEAAAKGDQRAELALEVFAGRIHKYIGSYAARMCGVDAIIFTAGIGENSDIVRAKVLRGLEFMGVYWDPALNKVRGKEAFISYPHSPVKVLVIPTNEEVMIARDVMRLANLA.

Asn8 provides a ligand contact to Mg(2+). Lys15 contributes to the ATP binding site. Arg89 provides a ligand contact to substrate. Asp146 serves as the catalytic Proton donor/acceptor. ATP contacts are provided by residues 206 to 210, 281 to 283, and 329 to 333; these read HLGNG, DLR, and GIGEN. Glu382 serves as a coordination point for Mg(2+).

Belongs to the acetokinase family. Homodimer. The cofactor is Mg(2+). Mn(2+) serves as cofactor.

The protein resides in the cytoplasm. The enzyme catalyses acetate + ATP = acetyl phosphate + ADP. The protein operates within metabolic intermediate biosynthesis; acetyl-CoA biosynthesis; acetyl-CoA from acetate: step 1/2. In terms of biological role, catalyzes the formation of acetyl phosphate from acetate and ATP. Can also catalyze the reverse reaction. This is Acetate kinase from Anoxybacillus flavithermus (strain DSM 21510 / WK1).